A 506-amino-acid polypeptide reads, in one-letter code: Parthenolide synthase (506 aa).

A helical membrane pass occupies residues 10–30 (LFLPTLCTILISYIIIKYVLI). Asn32, Asn63, Asn121, Asn168, and Asn175 each carry an N-linked (GlcNAc...) asparagine glycan. Residues 301–321 (LLLNVLLGAIDTTFTTIVWAM) form a helical membrane-spanning segment. Cys448 serves as a coordination point for heme.

Belongs to the cytochrome P450 family.

It localises to the membrane. It catalyses the reaction (+)-costunolide + reduced [NADPH--hemoprotein reductase] + O2 = parthenolide + oxidized [NADPH--hemoprotein reductase] + H2O + H(+). It functions in the pathway secondary metabolite biosynthesis; terpenoid biosynthesis. Involved in the biosynthesis of germacrene-derived sesquiterpene lactones. Component of the parthenolide biosynthetic pathway; parthenolide and conjugates are promising anti-cancer drugs highly active against colon cancer cells. Catalyzes the conversion of costunolide to parthenolide. The protein is Parthenolide synthase of Tanacetum parthenium (Feverfew).